Consider the following 113-residue polypeptide: MAGYRKLGRPTDQRKAMLRNLVTSFLKHGKIETTETRAKETRSIAEKMITLAKRGDLHARRQVLSFVTEETVVQRLFEEIAPKYAERNGGYTRIYKVGPRRGDGAEVVILELV.

The protein belongs to the bacterial ribosomal protein bL17 family. As to quaternary structure, part of the 50S ribosomal subunit. Contacts protein L32.

The chain is Large ribosomal subunit protein bL17 from Clostridium botulinum (strain ATCC 19397 / Type A).